Reading from the N-terminus, the 547-residue chain is MNPVSLLSLSGERRSANWKPSSWDSNQIHQSLKSDFNDLQEKWHTELKQAVEQMLEAVAEPLQKLTLIDDIQRLGVAYRFEKQIDDALSSIYSNYAAEVSSKKDLLAASLYFRLLRQHGCYVSPDIFIQFKDEAGQFKASLGDDVEGLLSLYEASYLGIKGETILDDAKAFSTSTLENLMPHVEADIASRISHALHLPLHWNMRRMEARLYIDVYRENKKRRNDNLLEFARLDFNMLQVIHQRDLKDVSFWWDFLDLPRKLGFIRDRLMESFIFSVGLNFEPQFSECRKAATKDILLITVLDDIYDIYGSMDEVEIFNNAVNRWDLGAVDELPEYMQLCYLGLLNSVNELAYVTMKDTGRNVLDFLKKLWKRHFNAAVKESRWFHRQYTPTLEEYMENAQISIGAPLVLTHAYVKMLKYMPNEDVNHVDKYLKLISMMCYVFRLYDDWGTSKAEIERGDVPKAIQCYMHEAKVSEEIAREHIKNIINERWKELNEECLKATDLNRKFVAAVLDALRAAAFFYHDRDGFGEPDHKFKSQAMALFSQQV.

Arg-265, Asp-302, Asp-306, Arg-443, and Asp-446 together coordinate (2E,6E)-farnesyl diphosphate. Residues Asp-302 and Asp-306 each contribute to the Mg(2+) site. A DDXXD motif motif is present at residues 302 to 306; the sequence is DDIYD. Positions 446, 450, and 454 each coordinate Mg(2+).

It belongs to the terpene synthase family. Tpsb subfamily. In terms of assembly, monomer. Requires Mg(2+) as cofactor.

The protein localises to the cytoplasm. It catalyses the reaction (2E,6E)-farnesyl diphosphate = (1S,5S,6R)-alpha-bergamotene + diphosphate. It functions in the pathway secondary metabolite biosynthesis; terpenoid biosynthesis. Its function is as follows. Sesquiterpene synthase involved in the biosynthesis of volatile organic compounds. Mediates the conversion of (2E,6E)-farnesyl diphosphate (FPP) into alpha-bergamotene. Does not use (2E)-geranyl diphosphate (GPP) as substrate. This is Sesquiterpene synthase TPS3 from Cananga odorata (Ylang-ylang tree).